Here is a 619-residue protein sequence, read N- to C-terminus: Nuclear hormone receptor family member nhr-6 (619 aa).

The segment covering 1-18 (MEQLSIQTDELQDQFSNC) has biased composition (polar residues). 4 disordered regions span residues 1–29 (MEQLSIQTDELQDQFSNCSPASVDSSYSS), 58–86 (MSKNSSCSSSFDYGEFGPSSSSRKGSKTT), 103–134 (QVNTVPKPTKTEVESIPEEFEQKPSSSSHRLP), and 196–232 (QHFPVSDSRRGSQGTTSSSNNTGGTPSPHSSSLPTSP). A compositionally biased stretch (low complexity) spans 19–29 (SPASVDSSYSS). A compositionally biased stretch (polar residues) spans 125-134 (KPSSSSHRLP). Positions 206–232 (GSQGTTSSSNNTGGTPSPHSSSLPTSP) are enriched in low complexity. A DNA-binding region (nuclear receptor) is located at residues 265-340 (DKMCAVCNDR…VGMVKEIVRH (76 aa)). 2 consecutive NR C4-type zinc fingers follow at residues 268–288 (CAVCNDRAVCLHYGARTCEGC) and 304–328 (CAGNKTCPIDKRYRSRCQYCRYQKC). A disordered region spans residues 345-365 (GRRGRLSSKTKLARSEDQPSP). A compositionally biased stretch (basic residues) spans 346-356 (RRGRLSSKTKL). The 236-residue stretch at 365 to 600 (PPLPLLALMG…STDAPPACGS (236 aa)) folds into the NR LBD domain. The interval 589–600 (LRSTDAPPACGS) is AF-2.

The protein belongs to the nuclear hormone receptor family. NR4 subfamily. In hermaphrodites, expressed in the developing spermatheca and dorsal uterus. Expression includes the 8 cells of the dorsal somatic gonad primordium and the sujc cells that form the core of the spermatheca-uterine valve. Expressed in the precursor cells of the spermatheca-sheath lineages (SS cells) and in the precursors and descendents of the dorsal-uterine lineage (DU cells). In both hermaphroditic and male animals, expressed in a pair of head chemosensory neurons.

The protein localises to the nucleus. Functionally, transcriptional activator that induces gene expression by binding to the NGFI-B response element (NBRE) 5'-AAAGGTCA-3'. Required for proper morphogenesis of the spermatheca and the spermatheca-uterine valve formation. Promotes cell proliferation and differentiation of the spermatheca precursor cells during spermatheca development in larval stage L4. Might play a role in promoting G1/S phase progression in the spermatheca precursor cell lineage. Also required for the differentiation of the spermatheca-uterine junction core (sujc) cells which are generating the spermatheca-uterine valve. The protein is Nuclear hormone receptor family member nhr-6 (nhr-6) of Caenorhabditis elegans.